The chain runs to 537 residues: MEHKKAALLDLTQYGLTGVTDVLRNPSYEQLFEEETRPDLEGYERGVMTELGSVAVDTGIFTGRSPKDKYIVKDDTTKDTLWWSDQGKNDNKAITPAVWDDLKSLVTTQLSGKRLFVIDGFCGANPDTRLNVRIITEVAWQAHFVKNMFIRPTEAELENFEPDFVVMNGAKVTNPNYEKHGLNSENFVAFNLTERVQIIGGTWYGGEMKKGMFAMMNYLLPLKGIASMHCSANVGEKGDVAVFFGLSGTGKTTLSTDPKRQLIGDDEHGWDDDGIFNFEGGCYAKTIRLSKEAEPDIYNAIRRDALLENVTVRSDSSIDFNDGSKTENTRVSYPIYHIDNIVKPVSKAGHAKKVIFLTADAFGVLPPVAKLTPEQTKYHFLSGFTAKLAGTERGITEPTPTFSAAFGAAFLTLHPTQYAEVLVKRMEAAGAEAYIVNTGWNGTGKRISIQDTRGIIDAILDGSIDQAKTKNIPVFNLEVPTSLPGVDASILDPRDTYTDPLQWDSKAEDLAQRFIKNFAQYTDNEEGKALVKAGPQL.

The substrate site is built by Arg-64, Tyr-204, and Lys-210. ATP-binding positions include Lys-210, His-229, and 245–253; that span reads GLSGTGKTT. Residues Lys-210 and His-229 each coordinate Mn(2+). Mn(2+) is bound at residue Asp-266. Residues Glu-294, Arg-330, 446–447, and Thr-452 each bind ATP; that span reads RI. Arg-330 is a binding site for substrate.

It belongs to the phosphoenolpyruvate carboxykinase (ATP) family. Monomer. The cofactor is Mn(2+).

It is found in the cytoplasm. The catalysed reaction is oxaloacetate + ATP = phosphoenolpyruvate + ADP + CO2. Its pathway is carbohydrate biosynthesis; gluconeogenesis. Functionally, involved in the gluconeogenesis. Catalyzes the conversion of oxaloacetate (OAA) to phosphoenolpyruvate (PEP) through direct phosphoryl transfer between the nucleoside triphosphate and OAA. The polypeptide is Phosphoenolpyruvate carboxykinase (ATP) (Aliivibrio fischeri (strain ATCC 700601 / ES114) (Vibrio fischeri)).